The following is a 475-amino-acid chain: MSIRTPPRLLELAGRSLLRDEALAISTLEELPTELFPPLFMEAFSRRHCEALKLMVQAWPFLRLPLGSLMKRPCPETFQAVLDGLDALLTHRVRLRRWKLQVLDLQDVSENFWMVWSEAMARRCLPNAMMNRKPLQDCPRMRGQQPLTVFIDLCLKNRTLDEYFTCLFLWVKQREGLVHLCCKKLKMLGMLFHNIRNILKTVNLDCIQEVEVNCNWTLPVLAEFTPYLGQMRNLRKLVLSDIDSRYISPEQKKEFVTQFTTQFLKLRCLQKLYMNSVSFLEGHLDQMLSCLKTSLNILAITNCVLLESDLKHLSKYPSIGQLKTLDLSGTRLANFSLVPLQVLLEKVAATLEYLDLDDCGIVDSQVNAILPALSRCFELTTFSFRGNPISTATLENLLCHTIRLNNLCLELYPAPRESYDVRGIVCRSRFAQLGAELMGRVRALREPERILFCTDYCPQCGNRSLYDLEVDRCCC.

The LRR 1; degenerate repeat unit spans residues R97–C124. One copy of the LRR 2; degenerate repeat lies at H179–N203. The stretch at L204–Q230 is one LRR 3; degenerate repeat. The stretch at M231 to K265 is one LRR 4; degenerate repeat. 5 LRR repeats span residues L266–L291, K292–K323, T324–V342, A348–R375, and C376–H400.

The protein belongs to the PRAME family.

The polypeptide is PRAME family member 20 (Homo sapiens (Human)).